The chain runs to 92 residues: Small ribosomal subunit protein bS20 (92 aa).

The disordered stretch occupies residues 1–23 (MANTPSAKKRAKQAEKRRSHNAS). The span at 7 to 20 (AKKRAKQAEKRRSH) shows a compositional bias: basic residues.

It belongs to the bacterial ribosomal protein bS20 family.

Its function is as follows. Binds directly to 16S ribosomal RNA. This is Small ribosomal subunit protein bS20 from Pseudomonas fluorescens (strain SBW25).